We begin with the raw amino-acid sequence, 160 residues long: 2-C-methyl-D-erythritol 2,4-cyclodiphosphate synthase (160 aa).

A divalent metal cation-binding residues include Asp-11 and His-13. Residues 11–13 (DIH) and 37–38 (HS) each bind 4-CDP-2-C-methyl-D-erythritol 2-phosphate. Residue His-45 coordinates a divalent metal cation. 4-CDP-2-C-methyl-D-erythritol 2-phosphate contacts are provided by residues 59 to 61 (DIG), 135 to 138 (TTNE), and Arg-145.

Belongs to the IspF family. As to quaternary structure, homotrimer. A divalent metal cation serves as cofactor.

It catalyses the reaction 4-CDP-2-C-methyl-D-erythritol 2-phosphate = 2-C-methyl-D-erythritol 2,4-cyclic diphosphate + CMP. The protein operates within isoprenoid biosynthesis; isopentenyl diphosphate biosynthesis via DXP pathway; isopentenyl diphosphate from 1-deoxy-D-xylulose 5-phosphate: step 4/6. Its function is as follows. Involved in the biosynthesis of isopentenyl diphosphate (IPP) and dimethylallyl diphosphate (DMAPP), two major building blocks of isoprenoid compounds. Catalyzes the conversion of 4-diphosphocytidyl-2-C-methyl-D-erythritol 2-phosphate (CDP-ME2P) to 2-C-methyl-D-erythritol 2,4-cyclodiphosphate (ME-CPP) with a corresponding release of cytidine 5-monophosphate (CMP). The protein is 2-C-methyl-D-erythritol 2,4-cyclodiphosphate synthase of Nostoc punctiforme (strain ATCC 29133 / PCC 73102).